We begin with the raw amino-acid sequence, 122 residues long: Large ribosomal subunit protein uL14 (122 aa).

It belongs to the universal ribosomal protein uL14 family. As to quaternary structure, part of the 50S ribosomal subunit. Forms a cluster with proteins L3 and L19. In the 70S ribosome, L14 and L19 interact and together make contacts with the 16S rRNA in bridges B5 and B8.

In terms of biological role, binds to 23S rRNA. Forms part of two intersubunit bridges in the 70S ribosome. The sequence is that of Large ribosomal subunit protein uL14 from Bdellovibrio bacteriovorus (strain ATCC 15356 / DSM 50701 / NCIMB 9529 / HD100).